We begin with the raw amino-acid sequence, 434 residues long: Nicotinate phosphoribosyltransferase (434 aa).

At His242 the chain carries Phosphohistidine; by autocatalysis.

It belongs to the NAPRTase family. Transiently phosphorylated on a His residue during the reaction cycle. Phosphorylation strongly increases the affinity for substrates and increases the rate of nicotinate D-ribonucleotide production. Dephosphorylation regenerates the low-affinity form of the enzyme, leading to product release.

The enzyme catalyses nicotinate + 5-phospho-alpha-D-ribose 1-diphosphate + ATP + H2O = nicotinate beta-D-ribonucleotide + ADP + phosphate + diphosphate. It participates in cofactor biosynthesis; NAD(+) biosynthesis; nicotinate D-ribonucleotide from nicotinate: step 1/1. Catalyzes the synthesis of beta-nicotinate D-ribonucleotide from nicotinate and 5-phospho-D-ribose 1-phosphate at the expense of ATP. In Rhizobium leguminosarum bv. trifolii (strain WSM2304), this protein is Nicotinate phosphoribosyltransferase.